A 141-amino-acid polypeptide reads, in one-letter code: Large ribosomal subunit protein uL22 (141 aa).

The interval 108-141 is disordered; that stretch reads KSEEKKTVAKKTTTTKAPAKKTTSTKKATVKKES. Residues 117–134 show a composition bias toward low complexity; sequence KKTTTTKAPAKKTTSTKK.

Belongs to the universal ribosomal protein uL22 family. As to quaternary structure, part of the 50S ribosomal subunit.

Its function is as follows. This protein binds specifically to 23S rRNA; its binding is stimulated by other ribosomal proteins, e.g. L4, L17, and L20. It is important during the early stages of 50S assembly. It makes multiple contacts with different domains of the 23S rRNA in the assembled 50S subunit and ribosome. In terms of biological role, the globular domain of the protein is located near the polypeptide exit tunnel on the outside of the subunit, while an extended beta-hairpin is found that lines the wall of the exit tunnel in the center of the 70S ribosome. The sequence is that of Large ribosomal subunit protein uL22 from Campylobacter jejuni subsp. jejuni serotype O:2 (strain ATCC 700819 / NCTC 11168).